A 259-amino-acid chain; its full sequence is Phosphatidylglycerol--prolipoprotein diacylglyceryl transferase (259 aa).

7 helical membrane-spanning segments follow: residues 9 to 29 (LGPL…ILAV), 48 to 68 (DFIL…YVIF), 83 to 103 (IWHG…VLFI), 114 to 133 (DFLD…GRWG), 167 to 187 (TPTF…IMIL), 197 to 217 (GEVA…IEGM), and 227 to 247 (LRVS…LIVI). Residue Arg131 participates in a 1,2-diacyl-sn-glycero-3-phospho-(1'-sn-glycerol) binding.

Belongs to the Lgt family.

Its subcellular location is the cell membrane. It catalyses the reaction L-cysteinyl-[prolipoprotein] + a 1,2-diacyl-sn-glycero-3-phospho-(1'-sn-glycerol) = an S-1,2-diacyl-sn-glyceryl-L-cysteinyl-[prolipoprotein] + sn-glycerol 1-phosphate + H(+). It participates in protein modification; lipoprotein biosynthesis (diacylglyceryl transfer). Functionally, catalyzes the transfer of the diacylglyceryl group from phosphatidylglycerol to the sulfhydryl group of the N-terminal cysteine of a prolipoprotein, the first step in the formation of mature lipoproteins. This chain is Phosphatidylglycerol--prolipoprotein diacylglyceryl transferase, found in Streptococcus mutans serotype c (strain ATCC 700610 / UA159).